The chain runs to 619 residues: Protein CPn_1016/CP_0837/CPj1016/CpB1054 (619 aa).

A disordered region spans residues 591–619; that stretch reads NAKKSEEQTSPQETPEVIRVSYPTTTSAL.

Belongs to the chlamydial CPn_1016/CT_858/TC_0248 family.

This chain is Protein CPn_1016/CP_0837/CPj1016/CpB1054, found in Chlamydia pneumoniae (Chlamydophila pneumoniae).